Here is a 383-residue protein sequence, read N- to C-terminus: S-adenosylmethionine synthase 1 (383 aa).

H15 provides a ligand contact to ATP. D17 contacts Mg(2+). E43 serves as a coordination point for K(+). L-methionine-binding residues include E56 and Q99. The interval 99-109 is flexible loop; the sequence is QSPDINLGVSR. Residues 162–164, 228–229, D237, 243–244, A260, and K264 contribute to the ATP site; these read DGK, RF, and RK. An L-methionine-binding site is contributed by D237. K268 serves as a coordination point for L-methionine.

It belongs to the AdoMet synthase family. As to quaternary structure, homotetramer; dimer of dimers. Requires Mg(2+) as cofactor. The cofactor is K(+).

Its subcellular location is the cytoplasm. It carries out the reaction L-methionine + ATP + H2O = S-adenosyl-L-methionine + phosphate + diphosphate. It participates in amino-acid biosynthesis; S-adenosyl-L-methionine biosynthesis; S-adenosyl-L-methionine from L-methionine: step 1/1. Catalyzes the formation of S-adenosylmethionine (AdoMet) from methionine and ATP. The overall synthetic reaction is composed of two sequential steps, AdoMet formation and the subsequent tripolyphosphate hydrolysis which occurs prior to release of AdoMet from the enzyme. This chain is S-adenosylmethionine synthase 1, found in Rhodopseudomonas palustris (strain BisB18).